We begin with the raw amino-acid sequence, 285 residues long: Putative L(+)-tartrate dehydratase subunit alpha (285 aa).

Iron-sulfur cluster is bound by residues Cys60, Cys182, and Cys269.

Belongs to the class-I fumarase family. Tetramer of two alpha and two beta subunits. Requires iron-sulfur cluster as cofactor.

The catalysed reaction is (2R,3R)-tartrate = oxaloacetate + H2O. This is Putative L(+)-tartrate dehydratase subunit alpha from Methanocaldococcus jannaschii (strain ATCC 43067 / DSM 2661 / JAL-1 / JCM 10045 / NBRC 100440) (Methanococcus jannaschii).